We begin with the raw amino-acid sequence, 86 residues long: Small ribosomal subunit protein uS17 (86 aa).

This sequence belongs to the universal ribosomal protein uS17 family. As to quaternary structure, part of the 30S ribosomal subunit.

One of the primary rRNA binding proteins, it binds specifically to the 5'-end of 16S ribosomal RNA. The sequence is that of Small ribosomal subunit protein uS17 from Dehalococcoides mccartyi (strain ATCC BAA-2266 / KCTC 15142 / 195) (Dehalococcoides ethenogenes (strain 195)).